The chain runs to 180 residues: Dual-action ribosomal maturation protein DarP (180 aa).

It belongs to the DarP family.

The protein resides in the cytoplasm. Member of a network of 50S ribosomal subunit biogenesis factors which assembles along the 30S-50S interface, preventing incorrect 23S rRNA structures from forming. Promotes peptidyl transferase center (PTC) maturation. This chain is Dual-action ribosomal maturation protein DarP, found in Chromobacterium violaceum (strain ATCC 12472 / DSM 30191 / JCM 1249 / CCUG 213 / NBRC 12614 / NCIMB 9131 / NCTC 9757 / MK).